Reading from the N-terminus, the 58-residue chain is Large ribosomal subunit protein eL24 (58 aa).

C6, C9, C32, and C36 together coordinate Zn(2+). The C4-type zinc-finger motif lies at 6–36 (CAFCGADILPGYGIMYVKTDGTTLRFCSRKC).

It belongs to the eukaryotic ribosomal protein eL24 family. In terms of assembly, part of the 50S ribosomal subunit. Forms a cluster with proteins L3 and L14. Zn(2+) serves as cofactor.

Its function is as follows. Binds to the 23S rRNA. The polypeptide is Large ribosomal subunit protein eL24 (Pyrobaculum islandicum (strain DSM 4184 / JCM 9189 / GEO3)).